The sequence spans 215 residues: MKGVYFVSGIDTDIGKTVATGMLAKQLLQQGKSVITQKPVQTGCQDIAEDIAVHRKIMGIPMQEADKRRLTMPEIFSYPASPHLAARLDGRALDLDKIRTATQELAAQYEIVLVEGAGGLMVPLTEKLLTIDYIQQQAYPVILVTSGRLGSINHTLLSFAALKQYGIRLHSLVFNHIHDSRDAHIAQYSLSYLKCRLKADFSEAEWMELAKTDAV.

Aspartate 13–valine 18 is an ATP binding site. Threonine 17 provides a ligand contact to Mg(2+). Residue lysine 38 is part of the active site. A substrate-binding site is contributed by threonine 42. ATP is bound by residues aspartate 50, glutamate 115 to glycine 118, and asparagine 175 to histidine 176. 2 residues coordinate Mg(2+): aspartate 50 and glutamate 115.

It belongs to the dethiobiotin synthetase family. As to quaternary structure, homodimer. Requires Mg(2+) as cofactor.

It localises to the cytoplasm. The enzyme catalyses (7R,8S)-7,8-diammoniononanoate + CO2 + ATP = (4R,5S)-dethiobiotin + ADP + phosphate + 3 H(+). It functions in the pathway cofactor biosynthesis; biotin biosynthesis; biotin from 7,8-diaminononanoate: step 1/2. Catalyzes a mechanistically unusual reaction, the ATP-dependent insertion of CO2 between the N7 and N8 nitrogen atoms of 7,8-diaminopelargonic acid (DAPA, also called 7,8-diammoniononanoate) to form a ureido ring. The polypeptide is ATP-dependent dethiobiotin synthetase BioD (Neisseria meningitidis serogroup C / serotype 2a (strain ATCC 700532 / DSM 15464 / FAM18)).